A 393-amino-acid chain; its full sequence is NAD(P)H-quinone oxidoreductase subunit H, chloroplastic (393 aa).

This sequence belongs to the complex I 49 kDa subunit family. As to quaternary structure, NDH is composed of at least 16 different subunits, 5 of which are encoded in the nucleus.

It localises to the plastid. Its subcellular location is the chloroplast thylakoid membrane. It carries out the reaction a plastoquinone + NADH + (n+1) H(+)(in) = a plastoquinol + NAD(+) + n H(+)(out). It catalyses the reaction a plastoquinone + NADPH + (n+1) H(+)(in) = a plastoquinol + NADP(+) + n H(+)(out). Its function is as follows. NDH shuttles electrons from NAD(P)H:plastoquinone, via FMN and iron-sulfur (Fe-S) centers, to quinones in the photosynthetic chain and possibly in a chloroplast respiratory chain. The immediate electron acceptor for the enzyme in this species is believed to be plastoquinone. Couples the redox reaction to proton translocation, and thus conserves the redox energy in a proton gradient. The chain is NAD(P)H-quinone oxidoreductase subunit H, chloroplastic from Fagopyrum esculentum subsp. ancestrale (Wild buckwheat).